The chain runs to 180 residues: Large ribosomal subunit protein uL5 (180 aa).

It belongs to the universal ribosomal protein uL5 family. In terms of assembly, part of the 50S ribosomal subunit; part of the 5S rRNA/L5/L18/L25 subcomplex. Contacts the 5S rRNA and the P site tRNA. Forms a bridge to the 30S subunit in the 70S ribosome.

Its function is as follows. This is one of the proteins that bind and probably mediate the attachment of the 5S RNA into the large ribosomal subunit, where it forms part of the central protuberance. In the 70S ribosome it contacts protein S13 of the 30S subunit (bridge B1b), connecting the 2 subunits; this bridge is implicated in subunit movement. Contacts the P site tRNA; the 5S rRNA and some of its associated proteins might help stabilize positioning of ribosome-bound tRNAs. The sequence is that of Large ribosomal subunit protein uL5 from Lactobacillus helveticus (strain DPC 4571).